The following is a 306-amino-acid chain: Pantothenate kinase (306 aa).

Residue 91-98 (GSVAVGKS) participates in ATP binding.

Belongs to the prokaryotic pantothenate kinase family.

The protein localises to the cytoplasm. The enzyme catalyses (R)-pantothenate + ATP = (R)-4'-phosphopantothenate + ADP + H(+). The protein operates within cofactor biosynthesis; coenzyme A biosynthesis; CoA from (R)-pantothenate: step 1/5. In Streptococcus pyogenes serotype M5 (strain Manfredo), this protein is Pantothenate kinase.